The sequence spans 121 residues: Large ribosomal subunit protein uL14c (121 aa).

It belongs to the universal ribosomal protein uL14 family. Part of the 50S ribosomal subunit.

It localises to the plastid. It is found in the chloroplast. Its function is as follows. Binds to 23S rRNA. This is Large ribosomal subunit protein uL14c from Euglena gracilis.